We begin with the raw amino-acid sequence, 286 residues long: Putative quercetin 2,3-dioxygenase PA2418 (286 aa).

His-61, His-63, His-105, and Glu-107 together coordinate a divalent metal cation.

The protein belongs to the pirin family. It depends on a divalent metal cation as a cofactor.

It carries out the reaction quercetin + O2 = 2-(3,4-dihydroxybenzoyloxy)-4,6-dihydroxybenzoate + CO. Its pathway is flavonoid metabolism; quercetin degradation. Its function is as follows. Putative quercetin 2,3-dioxygenase. In Pseudomonas aeruginosa (strain ATCC 15692 / DSM 22644 / CIP 104116 / JCM 14847 / LMG 12228 / 1C / PRS 101 / PAO1), this protein is Putative quercetin 2,3-dioxygenase PA2418.